The chain runs to 108 residues: BH3-like motif-containing cell death inducer (108 aa).

The short motif at 5–12 (LPIEGQEI) is the BH3-like element.

In terms of tissue distribution, ubiquitously expressed.

The protein localises to the cytoplasm. The protein resides in the mitochondrion. Its function is as follows. Functions as a proapoptotic molecule through the caspase-dependent mitochondrial pathway of cell death. This is BH3-like motif-containing cell death inducer (BLID) from Homo sapiens (Human).